A 411-amino-acid polypeptide reads, in one-letter code: Putative ion-transport protein YfeO (411 aa).

Transmembrane regions (helical) follow at residues 9–29 (MLLL…VLIA), 54–74 (DSPF…GLII), 99–119 (ALPG…SLGP), 149–169 (ILAS…AALI), 186–206 (LFAP…FFHP), 223–243 (IASG…AVWC), 258–278 (VLIL…GGPL), 296–316 (LGAG…VIAA), 322–342 (GGRI…LHAH), 343–363 (VEAV…VLVV), and 386–406 (LLCI…LLAA).

Belongs to the chloride channel (TC 2.A.49) family.

The protein localises to the cell membrane. This chain is Putative ion-transport protein YfeO, found in Salmonella agona (strain SL483).